A 739-amino-acid chain; its full sequence is Alcohol dehydrogenase (quinone), dehydrogenase subunit (739 aa).

The N-terminal stretch at 1 to 35 is a signal peptide; the sequence is MISAVFGKRRSLSRTLTAGTICAALISGYATMASA. A pyrroloquinoline quinone-binding site is contributed by E97. C143 and C144 are joined by a disulfide. Position 149 (R149) interacts with pyrroloquinoline quinone. E217 contributes to the Ca(2+) binding site. Residue T279 coordinates pyrroloquinoline quinone. Ca(2+) contacts are provided by N299 and D344. The active-site Proton acceptor is the D344. Pyrroloquinoline quinone contacts are provided by K371 and I585. The Cytochrome c domain maps to 635–739; that stretch reads FDSKRTDNGY…NADGIPEQLP (105 aa). The heme c site is built by C651, C654, H655, and M694.

The protein belongs to the bacterial PQQ dehydrogenase family. In terms of assembly, the alcohol dehydrogenase multicomponent enzyme system is composed of a dehydrogenase subunit I (AdhA) and a cytochrome c subunit II (AdhB). Pyrroloquinoline quinone serves as cofactor. The cofactor is Ca(2+). Heme c is required as a cofactor.

Its subcellular location is the cell membrane. The catalysed reaction is ethanol + a ubiquinone = a ubiquinol + acetaldehyde. Its function is as follows. Dehydrogenase component of the alcohol dehydrogenase multicomponent enzyme system which is involved in the production of acetic acid and in the ethanol oxidase respiratory chain. Quinohemoprotein alcohol dehydrogenase (ADH) catalyzes the oxidation of ethanol to acetaldehyde by transferring electrons to the ubiquinone embedded in the membrane phospholipids. The electrons transfer from ethanol to membranous ubiquinone occurs from pyrroloquinoline quinone (PQQ) to one heme c in subunit I (AdhA), and finally to two heme c in subunit II (AdhB). Besides ubiquinone reduction, ADH also has a ubiquinol (QH2) oxidation reaction which mediates electron transfer from ubiquinol to the non-energy generating bypass oxidase system. The electrons transfer occurs from ubiquinol (QH2) to the additional heme c within subunit II (AdhB). This Komagataeibacter europaeus (Gluconacetobacter europaeus) protein is Alcohol dehydrogenase (quinone), dehydrogenase subunit.